Consider the following 438-residue polypeptide: Shikimate transporter (438 aa).

12 helical membrane passes run 28–48 (FAGA…AALV), 64–84 (LAAF…GVIF), 109–129 (ALIG…ILLV), 133–153 (AIQG…SVES), 168–188 (VGYG…SMMT), 193–213 (FLSW…LGAL), 255–275 (IIAL…FALN), 287–307 (LFLN…PCFA), 318–337 (VYIT…FMAL), 341–363 (SIFW…VVCV), 387–407 (VASV…ITYF), and 411–431 (WHSV…TALL).

It belongs to the major facilitator superfamily. Metabolite:H+ Symporter (MHS) family (TC 2.A.1.6) family.

Its subcellular location is the cell inner membrane. The catalysed reaction is shikimate(in) + H(+)(in) = shikimate(out) + H(+)(out). Its function is as follows. Involved in the uptake of shikimate, an intermediate in the aromatic amino acid biosynthetic pathway. This Escherichia coli (strain K12) protein is Shikimate transporter.